Reading from the N-terminus, the 159-residue chain is Cytochrome c-type biogenesis protein CcmE (159 aa).

Over 1-23 (MNNSSLENSASLKVILKQRKKKR) the chain is Cytoplasmic. A helical; Signal-anchor for type II membrane protein membrane pass occupies residues 24–44 (LLIILLCCLVMAIAASLVVYA). The Periplasmic segment spans residues 45-159 (MRHAVSFFRM…RLKKHYSVEK (115 aa)). The heme site is built by H138 and Y142.

It belongs to the CcmE/CycJ family.

The protein resides in the cell inner membrane. In terms of biological role, heme chaperone required for the biogenesis of c-type cytochromes. Transiently binds heme delivered by CcmC and transfers the heme to apo-cytochromes in a process facilitated by CcmF and CcmH. The sequence is that of Cytochrome c-type biogenesis protein CcmE from Bartonella tribocorum (strain CIP 105476 / IBS 506).